A 249-amino-acid polypeptide reads, in one-letter code: Aspartate/glutamate leucyltransferase (249 aa).

This sequence belongs to the R-transferase family. Bpt subfamily.

Its subcellular location is the cytoplasm. It carries out the reaction N-terminal L-glutamyl-[protein] + L-leucyl-tRNA(Leu) = N-terminal L-leucyl-L-glutamyl-[protein] + tRNA(Leu) + H(+). The catalysed reaction is N-terminal L-aspartyl-[protein] + L-leucyl-tRNA(Leu) = N-terminal L-leucyl-L-aspartyl-[protein] + tRNA(Leu) + H(+). Functionally, functions in the N-end rule pathway of protein degradation where it conjugates Leu from its aminoacyl-tRNA to the N-termini of proteins containing an N-terminal aspartate or glutamate. The chain is Aspartate/glutamate leucyltransferase from Brucella melitensis biotype 2 (strain ATCC 23457).